Reading from the N-terminus, the 263-residue chain is Ribosomal RNA small subunit methyltransferase A (263 aa).

S-adenosyl-L-methionine is bound by residues N20, L22, G47, E68, D90, and N110.

Belongs to the class I-like SAM-binding methyltransferase superfamily. rRNA adenine N(6)-methyltransferase family. RsmA subfamily.

It localises to the cytoplasm. The catalysed reaction is adenosine(1518)/adenosine(1519) in 16S rRNA + 4 S-adenosyl-L-methionine = N(6)-dimethyladenosine(1518)/N(6)-dimethyladenosine(1519) in 16S rRNA + 4 S-adenosyl-L-homocysteine + 4 H(+). In terms of biological role, specifically dimethylates two adjacent adenosines (A1518 and A1519) in the loop of a conserved hairpin near the 3'-end of 16S rRNA in the 30S particle. May play a critical role in biogenesis of 30S subunits. This Chlorobium limicola (strain DSM 245 / NBRC 103803 / 6330) protein is Ribosomal RNA small subunit methyltransferase A.